Consider the following 572-residue polypeptide: Arginine--tRNA ligase (572 aa).

Residues 122-132 (PNLAKEMHVGH) carry the 'HIGH' region motif.

Belongs to the class-I aminoacyl-tRNA synthetase family. Monomer.

Its subcellular location is the cytoplasm. The catalysed reaction is tRNA(Arg) + L-arginine + ATP = L-arginyl-tRNA(Arg) + AMP + diphosphate. In Neisseria meningitidis serogroup B (strain ATCC BAA-335 / MC58), this protein is Arginine--tRNA ligase.